Consider the following 554-residue polypeptide: uncharacterized protein (554 aa).

The next 5 helical transmembrane spans lie at 13–31 (SVAH…GVYL), 36–58 (IFGV…HFGF), 73–92 (LILF…FSSF), 99–121 (LNLL…YYLW), and 161–183 (IALG…IIAI). 2 RCK C-terminal domains span residues 199-281 (KTQS…FIGK) and 282-366 (EVEL…VLGN). A run of 4 helical transmembrane segments spans residues 376-395 (IVTI…LPIA), 405-422 (LGLA…GRFG), 442-464 (IGIV…QTVV), and 468-490 (GLLY…GAIA).

This sequence belongs to the AAE transporter (TC 2.A.81) family.

The protein localises to the cell membrane. This is an uncharacterized protein from Bacteroides thetaiotaomicron (strain ATCC 29148 / DSM 2079 / JCM 5827 / CCUG 10774 / NCTC 10582 / VPI-5482 / E50).